A 307-amino-acid polypeptide reads, in one-letter code: Acetaldehyde dehydrogenase (307 aa).

S12 to I15 provides a ligand contact to NAD(+). Residue C130 is the Acyl-thioester intermediate of the active site. Residues S161 to N169 and N272 contribute to the NAD(+) site.

Belongs to the acetaldehyde dehydrogenase family.

The catalysed reaction is acetaldehyde + NAD(+) + CoA = acetyl-CoA + NADH + H(+). This chain is Acetaldehyde dehydrogenase, found in Shewanella pealeana (strain ATCC 700345 / ANG-SQ1).